The sequence spans 170 residues: Group 2 truncated hemoglobin 3-1 (170 aa).

Histidine 98 is a binding site for heme b.

It belongs to the truncated hemoglobin family. Group II subfamily. As to quaternary structure, homodimer when ferric.

Hemoglobin-like protein that exhibits an unusual concentration-independent binding of O(2) and CO. Required for general plant development and during nodulation. May promote shoot organogenesis from root explants. The chain is Group 2 truncated hemoglobin 3-1 from Medicago truncatula (Barrel medic).